The primary structure comprises 205 residues: Small ribosomal subunit protein uS4 (205 aa).

Basic and acidic residues predominate over residues 1–16 (MSKRESSKYKIDRRMG). Residues 1 to 46 (MSKRESSKYKIDRRMGENIWGRPKSPVNRREYGPGQHGQRRKSKLS) are disordered. In terms of domain architecture, S4 RNA-binding spans 94-157 (SRLDAIVYRA…KQLVTVLEAV (64 aa)).

The protein belongs to the universal ribosomal protein uS4 family. Part of the 30S ribosomal subunit. Contacts protein S5. The interaction surface between S4 and S5 is involved in control of translational fidelity.

Its function is as follows. One of the primary rRNA binding proteins, it binds directly to 16S rRNA where it nucleates assembly of the body of the 30S subunit. With S5 and S12 plays an important role in translational accuracy. This is Small ribosomal subunit protein uS4 from Rhizobium meliloti (strain 1021) (Ensifer meliloti).